A 222-amino-acid chain; its full sequence is Putative O-methyltransferase MAV_1364 (222 aa).

Residues valine 49, glutamate 71, 73 to 74 (GT), serine 79, aspartate 97, and isoleucine 98 contribute to the S-adenosyl-L-methionine site. Aspartate 145 is a binding site for substrate. Aspartate 147 lines the S-adenosyl-L-methionine pocket.

This sequence belongs to the class I-like SAM-binding methyltransferase superfamily. Cation-dependent O-methyltransferase family.

The sequence is that of Putative O-methyltransferase MAV_1364 from Mycobacterium avium (strain 104).